Consider the following 356-residue polypeptide: Proline-rich protein 19 (356 aa).

Over residues Met1 to Gln12 the composition is skewed to polar residues. 4 disordered regions span residues Met1–Pro53, Leu95–Gly143, Ile216–Leu255, and Pro312–Ser331. Residues Arg19–Arg29 are compositionally biased toward basic residues.

As to quaternary structure, interacts with CNTD1.

It localises to the nucleus. The protein resides in the chromosome. Promotes meiotic crossing over formation through its interaction with CNTD1 by participating in the crossover differentiation step of crossover-specific recombination intermediates. In Homo sapiens (Human), this protein is Proline-rich protein 19.